A 352-amino-acid polypeptide reads, in one-letter code: MVFRIASSPYTHNQRQTSRIMLLVLLAAVPGIAAQLWFFGWGTLVQILLASVSALLAEALVLKLRKQSVAATLKDNSALLTGLLLAVSIPPLAPWWMVVLGTVFAVIIAKQLYGGLGQNPFNPAMIGYVVLLISFPVQMTSWLPPHEIAVNIPGFIDAIQVIFSGHTASGGDMNTLRLGIDGISQATPLDTFKTSVRAGHSVEQIMQYPIYSGILAGAGWQWVNLAWLAGGVWLLWQKAIRWHIPLSFLVTLALCAMLGWLFSPETLAAPQIHLLSGATMLGAFFILTDPVTASTTNRGRLIFGALAGLLVWLIRSFGGYPDGVAFAVLLANITVPLIDYYTRPRVYGHRKG.

The next 5 membrane-spanning stretches (helical) occupy residues 20-40 (IMLLVLLAAVPGIAAQLWFFG), 42-62 (GTLVQILLASVSALLAEALVL), 78-109 (ALLTGLLLAVSIPPLAPWWMVVLGTVFAVIIA), 123-143 (PAMIGYVVLLISFPVQMTSWL), and 148-168 (IAVNIPGFIDAIQVIFSGHTA). Residue Thr-187 is modified to FMN phosphoryl threonine. Helical transmembrane passes span 214–234 (ILAGAGWQWVNLAWLAGGVWL), 242–262 (WHIPLSFLVTLALCAMLGWLF), 267–287 (LAAPQIHLLSGATMLGAFFIL), 301–321 (LIFGALAGLLVWLIRSFGGYP), and 322–342 (DGVAFAVLLANITVPLIDYYT).

It belongs to the NqrB/RnfD family. The complex is composed of six subunits: RsxA, RsxB, RsxC, RsxD, RsxE and RsxG. It depends on FMN as a cofactor.

It is found in the cell inner membrane. Its function is as follows. Part of a membrane-bound complex that couples electron transfer with translocation of ions across the membrane. Required to maintain the reduced state of SoxR. Probably transfers electron from NAD(P)H to SoxR. This is Ion-translocating oxidoreductase complex subunit D from Escherichia coli (strain K12).